We begin with the raw amino-acid sequence, 514 residues long: Na(+)/H(+) antiporter NhaB (514 aa).

Transmembrane regions (helical) follow at residues 21-41, 43-63, 88-108, 143-163, 203-223, 239-259, 304-324, 349-369, 390-410, 448-468, and 484-504; these read LAIV…SPFI, GWLL…CYPL, IMAN…IFFM, FLDA…FYGV, LMMH…VGEP, FFLR…LTCF, ALIA…VGLI, QESL…AVII, LALF…VFVA, ATPN…SPLI, and IVLS…ATIW.

Belongs to the NhaB Na(+)/H(+) (TC 2.A.34) antiporter family.

The protein resides in the cell inner membrane. The catalysed reaction is 2 Na(+)(in) + 3 H(+)(out) = 2 Na(+)(out) + 3 H(+)(in). Functionally, na(+)/H(+) antiporter that extrudes sodium in exchange for external protons. The chain is Na(+)/H(+) antiporter NhaB from Haemophilus influenzae (strain 86-028NP).